A 400-amino-acid chain; its full sequence is Na(+)/H(+) antiporter NhaA (400 aa).

11 helical membrane-spanning segments follow: residues 10-30 (FNLE…AMII), 60-80 (AHHW…GLEL), 95-115 (IILP…VYLF), 126-146 (GWAI…SLLG), 155-175 (VFLV…IALF), 178-198 (NDLS…LYML), 218-238 (IAVL…ALFI), 265-285 (GILP…AGFG), 295-315 (IAAG…WLIF), 334-354 (AALL…LAFA), and 364-384 (LGII…LKTT).

This sequence belongs to the NhaA Na(+)/H(+) (TC 2.A.33) antiporter family.

The protein localises to the cell inner membrane. The catalysed reaction is Na(+)(in) + 2 H(+)(out) = Na(+)(out) + 2 H(+)(in). Its function is as follows. Na(+)/H(+) antiporter that extrudes sodium in exchange for external protons. This is Na(+)/H(+) antiporter NhaA from Psychrobacter arcticus (strain DSM 17307 / VKM B-2377 / 273-4).